Here is a 299-residue protein sequence, read N- to C-terminus: tRNA dimethylallyltransferase (299 aa).

G10–S17 is a binding site for ATP. T12–S17 is a binding site for substrate. The interaction with substrate tRNA stretch occupies residues D35–Q38.

The protein belongs to the IPP transferase family. As to quaternary structure, monomer. The cofactor is Mg(2+).

The catalysed reaction is adenosine(37) in tRNA + dimethylallyl diphosphate = N(6)-dimethylallyladenosine(37) in tRNA + diphosphate. Functionally, catalyzes the transfer of a dimethylallyl group onto the adenine at position 37 in tRNAs that read codons beginning with uridine, leading to the formation of N6-(dimethylallyl)adenosine (i(6)A). The chain is tRNA dimethylallyltransferase from Rippkaea orientalis (strain PCC 8801 / RF-1) (Cyanothece sp. (strain PCC 8801)).